Consider the following 400-residue polypeptide: MLARRKPVLPALTINPTIAEGPSPTSEGASEANLVDLQKKLEELELDEQQKKRLEAFLTQKAKVGELKDDDFERISELGAGNGGVVTKVQHRPSGLIMARKLIHLEIKPAIRNQIIRELQVLHECNSPYIVGFYGAFYSDGEISICMEHMDGGSLDQVLKEAKRIPEEILGKVSIAVLRGLAYLREKHQIMHRDVKPSNILVNSRGEIKLCDFGVSGQLIDSMANSFVGTRSYMAPERLQGTHYSVQSDIWSMGLSLVELAVGRYPIPPPDAKELEAIFGRPVVDGEEGEPHSISPRPRPPGRPVSGHGMDSRPAMAIFELLDYIVNEPPPKLPNGVFTPDFQEFVNKCLIKNPAERADLKMLTNHTFIKRSEVEEVDFAGWLCKTLRLNQPGTPTRTAV.

The residue at position 1 (Met1) is an N-acetylmethionine. Residue Ser23 is modified to Phosphoserine. The Protein kinase domain maps to 72–369 (FERISELGAG…LKMLTNHTFI (298 aa)). Residues 78 to 86 (LGAGNGGVV) and Lys101 contribute to the ATP site. Asp194 (proton acceptor) is an active-site residue. Ser222 and Ser226 each carry (Microbial infection) O-acetylserine; by Yersinia YopJ; alternate. The residue at position 222 (Ser222) is a Phosphoserine; by RAF; alternate. Residue Ser226 is modified to Phosphoserine; alternate. The disordered stretch occupies residues 286–310 (GEEGEPHSISPRPRPPGRPVSGHGM). A phosphoserine mark is found at Ser293, Ser295, and Ser306. Thr394 and Thr396 each carry phosphothreonine.

This sequence belongs to the protein kinase superfamily. STE Ser/Thr protein kinase family. MAP kinase kinase subfamily. As to quaternary structure, interacts with MORG1. Interacts with SGK1. Interacts with KSR1. Interacts with KSR1 and BRAF; the interaction with KSR1 mediates KSR1-BRAF dimerization. Interacts with GLS. Mg(2+) serves as cofactor. In terms of processing, MAPKK is itself dependent on Ser/Thr phosphorylation for activity catalyzed by MAP kinase kinase kinases (RAF or MEKK1). Phosphorylated by MAP2K1/MEK1. Post-translationally, (Microbial infection) Acetylation of Ser-222 and Ser-226 by Yersinia YopJ prevents phosphorylation and activation, thus blocking the MAPK signaling pathway.

The protein resides in the cytoplasm. The protein localises to the membrane. The catalysed reaction is L-seryl-[protein] + ATP = O-phospho-L-seryl-[protein] + ADP + H(+). It catalyses the reaction L-threonyl-[protein] + ATP = O-phospho-L-threonyl-[protein] + ADP + H(+). The enzyme catalyses L-tyrosyl-[protein] + ATP = O-phospho-L-tyrosyl-[protein] + ADP + H(+). Catalyzes the concomitant phosphorylation of a threonine and a tyrosine residue in a Thr-Glu-Tyr sequence located in MAP kinases. Activates the ERK1 and ERK2 MAP kinases. Activates BRAF in a KSR1 or KSR2-dependent manner; by binding to KSR1 or KSR2 releases the inhibitory intramolecular interaction between KSR1 or KSR2 protein kinase and N-terminal domains which promotes KSR1 or KSR2-BRAF dimerization and BRAF activation. This chain is Dual specificity mitogen-activated protein kinase kinase 2 (MAP2K2), found in Homo sapiens (Human).